Reading from the N-terminus, the 378-residue chain is SWI/SNF-related matrix-associated actin-dependent regulator of chromatin subfamily B member 1 (378 aa).

The segment at 1–106 is DNA-binding; that stretch reads MIMALSKTFG…DEKYKAVSIS (106 aa).

It belongs to the SNF5 family. As to quaternary structure, component of the multiprotein chromatin-remodeling complexes SWI/SNF. Component of neural progenitors-specific chromatin remodeling complex (npBAF complex) and the neuron-specific chromatin remodeling complex (nBAF complex). Component of the BAF (SWI/SNF) chromatin remodeling complex. Component of the SWI/SNF-B (PBAF) chromatin remodeling complex. Binds to double-stranded DNA.

It localises to the nucleus. Its function is as follows. Involved in chromatin-remodeling. Core component of the BAF (SWI/SNF) complex. This ATP-dependent chromatin-remodeling complex plays important roles in cell proliferation and differentiation, in cellular antiviral activities and inhibition of tumor formation. Belongs to the neural progenitors-specific chromatin remodeling complex (npBAF complex) and the neuron-specific chromatin remodeling complex (nBAF complex) and may play a role in neural development. This Xenopus laevis (African clawed frog) protein is SWI/SNF-related matrix-associated actin-dependent regulator of chromatin subfamily B member 1 (smarcb1).